Reading from the N-terminus, the 950-residue chain is ABC transporter A family member 9 (950 aa).

The next 6 membrane-spanning stretches (helical) occupy residues 31–51 (ATCL…SIEE), 223–243 (IISA…MFGF), 276–296 (WLIW…LFGM), 308–328 (FVLV…LAFA), 342–362 (VGFL…AGFP), and 426–446 (IWLV…DNII). Residues 520-765 (VQIHGLAKTY…FGTGFVATVS (246 aa)) form the ABC transporter domain. Position 566–573 (566–573 (GPNGAGKT)) interacts with ATP.

It belongs to the ABC transporter superfamily. ABCA family. CPR flippase (TC 3.A.1.211) subfamily. In terms of tissue distribution, highly expressed in siliques. Detected in seedlings, rosette leaves, stems and flowers.

It is found in the endoplasmic reticulum membrane. Mediates the transport of acyl-CoAs and/or free fatty acids to the endoplasmic reticulum. Has no effect on the selectivity of fatty acid incorporation into triacylglycerol or further desaturation steps. The chain is ABC transporter A family member 9 (ABCA9) from Arabidopsis thaliana (Mouse-ear cress).